We begin with the raw amino-acid sequence, 259 residues long: Phosphate import ATP-binding protein PstB (259 aa).

One can recognise an ABC transporter domain in the interval S6 to I254. ATP is bound at residue G45–S52.

This sequence belongs to the ABC transporter superfamily. Phosphate importer (TC 3.A.1.7) family. The complex is composed of two ATP-binding proteins (PstB), two transmembrane proteins (PstC and PstA) and a solute-binding protein (PstS).

Its subcellular location is the cell membrane. It carries out the reaction phosphate(out) + ATP + H2O = ADP + 2 phosphate(in) + H(+). Part of the ABC transporter complex PstSACB involved in phosphate import. Responsible for energy coupling to the transport system. The sequence is that of Phosphate import ATP-binding protein PstB from Desulfitobacterium hafniense (strain Y51).